Consider the following 420-residue polypeptide: Septin-8-A (420 aa).

Positions 39–305 constitute a Septin-type G domain; that stretch reads QGFCFNILCV…ELYRRCKLEE (267 aa). A G1 motif region spans residues 49 to 56; that stretch reads GETGIGKS. GTP-binding positions include 49-56, Gly104, 185-193, Gly239, and Arg254; these read GETGIGKS and KADTISKSE. The tract at residues 101-104 is G3 motif; the sequence is DTVG. Residues 184–187 are G4 motif; it reads AKAD. Residues 321-407 are a coiled coil; the sequence is QETYEAKRKE…RRKVAAETLS (87 aa). The segment at 393 to 420 is disordered; it reads MNAFNRRKVAAETLSLSQPLKKDKDKKN.

This sequence belongs to the TRAFAC class TrmE-Era-EngA-EngB-Septin-like GTPase superfamily. Septin GTPase family.

This is Septin-8-A (sept8a) from Danio rerio (Zebrafish).